A 103-amino-acid chain; its full sequence is Pseudonajatoxin b homolog (103 aa).

A signal peptide spans 1–21 (MKTLLLTLVVVTIVCLDLGYT). Intrachain disulfides connect Cys24/Cys42, Cys35/Cys63, Cys48/Cys52, Cys67/Cys79, and Cys80/Cys85.

This sequence belongs to the three-finger toxin family. Long-chain subfamily. Type II alpha-neurotoxin sub-subfamily. Expressed by the venom gland.

It localises to the secreted. Its function is as follows. Binds with high affinity to muscular (alpha-1/CHRNA1) and neuronal (alpha-7/CHRNA7) nicotinic acetylcholine receptor (nAChR) and inhibits acetylcholine from binding to the receptor, thereby impairing neuromuscular and neuronal transmission. The sequence is that of Pseudonajatoxin b homolog from Pseudonaja textilis (Eastern brown snake).